The chain runs to 911 residues: Alpha-actinin-4 (911 aa).

Residues 1 to 269 (MVDYHAANQS…YVSSFYHAFS (269 aa)) are actin-binding. Residues 12 to 26 (QYGPSSAGNGAGGGG) are interaction with VCL. Tyr31 is modified (phosphotyrosine). Residues 40–61 (RDLLLDPAWEKQQRKTFTAWCN) are interaction with VCL. 2 Calponin-homology (CH) domains span residues 50 to 154 (KQQR…LRFA) and 163 to 269 (TSAK…HAFS). An LXXLL motif motif is present at residues 84–88 (LMLLL). An interaction with VCL region spans residues 108–126 (KINNVNKALDFIASKGVKL). Lys114 is subject to N6-acetyllysine. Residues 177–192 (TAPYKNVNVQNFHISW) form a polyphosphoinositide (PIP2)-binding region. Residue Lys214 is modified to N6-acetyllysine. Thr249 bears the Phosphothreonine mark. 4 Spectrin repeats span residues 293-403 (HLME…WLLN), 413-518 (HLAE…ALEK), 528-639 (QLHL…ALLE), and 649-752 (HLRR…EVEN). Lys592 and Lys625 each carry N6-acetyllysine. Phosphoserine is present on Ser696. Residues 736–911 (WEQLLTTIAR…STALYGESDL (176 aa)) are mediates interaction with MICALL2. EF-hand domains are found at residues 765 to 800 (EQMQ…LGYD) and 806 to 841 (QGEA…ETTD). Asp778 provides a ligand contact to Ca(2+). Position 779 is an N6-acetyllysine (Lys779). 2 residues coordinate Ca(2+): Asp780 and Glu789. An N6-acetyllysine modification is found at Lys859. Phosphoserine is present on Ser909.

This sequence belongs to the alpha-actinin family. In terms of assembly, homodimer; antiparallel. Binds TRIM3 at the N-terminus. Interacts with MICALL2 (preferentially in opened conformation); stimulated by RAB13 activation. Identified in a complex with CASK, IQGAP1, MAGI2, NPHS1, SPTAN1 and SPTBN1. Identified in a IGF2BP1-dependent mRNP granule complex containing untranslated mRNAs. Component of the CART complex, at least composed of ACTN4, HGS/HRS, MYO5B and TRIM3. Interacts with MAGI1. Interacts with PDLIM2. Interacts with PPARG and RARA. Binds to VCL; this interaction triggers VCL conformational changes. Interacts with SEPTIN14. Interacts with IGSF8. In terms of tissue distribution, widely expressed.

The protein resides in the nucleus. Its subcellular location is the cytoplasm. It is found in the cell junction. The protein localises to the cytoskeleton. It localises to the stress fiber. The protein resides in the perinuclear region. Functionally, F-actin cross-linking protein which is thought to anchor actin to a variety of intracellular structures. This is a bundling protein. Probably involved in vesicular trafficking via its association with the CART complex. The CART complex is necessary for efficient transferrin receptor recycling but not for EGFR degradation. Involved in tight junction assembly in epithelial cells probably through interaction with MICALL2. Links MICALL2 to the actin cytoskeleton and recruits it to the tight junctions. May also function as a transcriptional coactivator, stimulating transcription mediated by the nuclear hormone receptors PPARG and RARA. Association with IGSF8 regulates the immune synapse formation and is required for efficient T-cell activation. The polypeptide is Alpha-actinin-4 (Homo sapiens (Human)).